Consider the following 111-residue polypeptide: uncharacterized protein (111 aa).

To B.subtilis XkdW.

This is an uncharacterized protein from Bacillus subtilis (strain 168).